We begin with the raw amino-acid sequence, 68 residues long: uncharacterized protein (68 aa).

To B.subtilis XtrA.

This is an uncharacterized protein from Bacillus subtilis (strain 168).